We begin with the raw amino-acid sequence, 660 residues long: Bifunctional polymyxin resistance protein ArnA (660 aa).

Residues 1-304 are formyltransferase ArnAFT; that stretch reads MKAVVFAYHD…TLGLVAGAII (304 aa). The active-site Proton donor; for formyltransferase activity is histidine 104. (6R)-10-formyltetrahydrofolate is bound by residues arginine 114 and 136–140; that span reads VSRAD. Positions 314–660 are dehydrogenase ArnADH; sequence RRTRVLILGV…KTVELTEPQA (347 aa). NAD(+) contacts are provided by residues aspartate 347 and 368–369; that span reads DI. UDP-alpha-D-glucuronate contacts are provided by residues alanine 393, tyrosine 398, and 432–433; that span reads TS. Glutamate 434 serves as the catalytic Proton acceptor; for decarboxylase activity. Residues arginine 460, asparagine 492, 526–535, and tyrosine 613 contribute to the UDP-alpha-D-glucuronate site; that span reads KLIDGGRQKR. The Proton donor; for decarboxylase activity role is filled by arginine 619.

This sequence in the N-terminal section; belongs to the Fmt family. UDP-L-Ara4N formyltransferase subfamily. The protein in the C-terminal section; belongs to the NAD(P)-dependent epimerase/dehydratase family. UDP-glucuronic acid decarboxylase subfamily. Homohexamer, formed by a dimer of trimers.

It carries out the reaction UDP-alpha-D-glucuronate + NAD(+) = UDP-beta-L-threo-pentopyranos-4-ulose + CO2 + NADH. The catalysed reaction is UDP-4-amino-4-deoxy-beta-L-arabinose + (6R)-10-formyltetrahydrofolate = UDP-4-deoxy-4-formamido-beta-L-arabinose + (6S)-5,6,7,8-tetrahydrofolate + H(+). The protein operates within nucleotide-sugar biosynthesis; UDP-4-deoxy-4-formamido-beta-L-arabinose biosynthesis; UDP-4-deoxy-4-formamido-beta-L-arabinose from UDP-alpha-D-glucuronate: step 1/3. It functions in the pathway nucleotide-sugar biosynthesis; UDP-4-deoxy-4-formamido-beta-L-arabinose biosynthesis; UDP-4-deoxy-4-formamido-beta-L-arabinose from UDP-alpha-D-glucuronate: step 3/3. It participates in bacterial outer membrane biogenesis; lipopolysaccharide biosynthesis. Functionally, bifunctional enzyme that catalyzes the oxidative decarboxylation of UDP-glucuronic acid (UDP-GlcUA) to UDP-4-keto-arabinose (UDP-Ara4O) and the addition of a formyl group to UDP-4-amino-4-deoxy-L-arabinose (UDP-L-Ara4N) to form UDP-L-4-formamido-arabinose (UDP-L-Ara4FN). The modified arabinose is attached to lipid A and is required for resistance to polymyxin and cationic antimicrobial peptides. This chain is Bifunctional polymyxin resistance protein ArnA, found in Enterobacter sp. (strain 638).